The primary structure comprises 609 residues: Kelch domain-containing protein 10 homolog (609 aa).

Residues 103–146 (ASDLDEEEEEEDDDVDVDVDYGDTDSESEFEEMYSDEWTSSSDE) are disordered. Over residues 104 to 137 (SDLDEEEEEEDDDVDVDVDYGDTDSESEFEEMYS) the composition is skewed to acidic residues. 6 Kelch repeats span residues 214 to 277 (HLYS…IHNN), 279 to 334 (LISH…IHKH), 335 to 381 (FLYT…RYRH), 389 to 437 (HIFV…GNRG), 458 to 508 (EAFI…HSDN), and 510 to 554 (CMYV…YNDN). The segment at 576–609 (LPPQRRRRLDTSQPDPSMLISLYSNPKRARSSTQ) is disordered.

In terms of assembly, interacts with Elongin-C; may be the substrate recognition component of an E3 ubiquitin ligase complex.

Activates the Pk92B/DASK1-MAPK signaling cascade. The chain is Kelch domain-containing protein 10 homolog (slim) from Drosophila melanogaster (Fruit fly).